We begin with the raw amino-acid sequence, 267 residues long: Eukaryotic translation initiation factor 3 subunit J (267 aa).

Disordered stretches follow at residues 1–118 and 221–241; these read MAPS…DLKH and MREE…KTKV. A compositionally biased stretch (acidic residues) spans 28–46; the sequence is DEEEEDVLDSWDAAEDSEV. The stretch at 44–99 forms a coiled coil; that stretch reads SEVEREKAAKAAAAAAKAEAEAAAKKKSKAQRIEERKQERKKLAEANESDEDSEED. The span at 74–88 shows a compositional bias: basic and acidic residues; it reads QRIEERKQERKKLAE. Residues 90 to 100 show a composition bias toward acidic residues; the sequence is NESDEDSEEDE. 2 stretches are compositionally biased toward basic and acidic residues: residues 108–118 and 221–231; these read RRTEKEGDLKH and MREERAADKGN.

The protein belongs to the eIF-3 subunit J family. Component of the eukaryotic translation initiation factor 3 (eIF-3) complex.

The protein localises to the cytoplasm. Functionally, component of the eukaryotic translation initiation factor 3 (eIF-3) complex, which is involved in protein synthesis of a specialized repertoire of mRNAs and, together with other initiation factors, stimulates binding of mRNA and methionyl-tRNAi to the 40S ribosome. The eIF-3 complex specifically targets and initiates translation of a subset of mRNAs involved in cell proliferation. The chain is Eukaryotic translation initiation factor 3 subunit J (hcr1) from Aspergillus fumigatus (strain CBS 144.89 / FGSC A1163 / CEA10) (Neosartorya fumigata).